The chain runs to 582 residues: MNIKNILSERVSAAMVAAGLPEGTNPAISLSNRPQFGDYQANGVMGAAKKLKTNPRELATKVVAELDLDGIASKIELAGPGFINIHLDESWLAAQLNEVAQDDFIGVAQRGTTPGDESQTVVVDYSAPNLAKEMHVGHLRSTIIGDAVVRALEFRGDKVIRQNHMGDWGTQFGMLIAHLSDKLASDEVAETALADLENFYREAKVRFDNEEGFADRARADVVKLQSGDEACAKLWQQFIDISITHSEEIYAKLNVSLKRSDIMGESAYNDDLSTVVDELMAKKIAEESQGAKVVFINEMANKDGEAPVFIVQKSGGGFLYATTDLSACRYRSGKLAANRIIIFTDARQALHFKQVEIVARKAGLLPENVGYQHCPFGMMMGDDGKPFKTRTGGTIKLAELLDESIVRAAALIKEKNPDITDTDLTEISKKVGIGAVKFADLSKNRTSDYIFDWKTMLSFEGATAPYLQYAYSRIQSIFSKAGTVKNDAVINIIEPQEKALALKLLQLEDVVDAVISECTPNLLCNYLYELASLYMSFYEACPILKEGISGEVKASRLALCNVVADTLKQGLDILGIETMERM.

A 'HIGH' region motif is present at residues 128-138; the sequence is PNLAKEMHVGH.

The protein belongs to the class-I aminoacyl-tRNA synthetase family. In terms of assembly, monomer.

It is found in the cytoplasm. It carries out the reaction tRNA(Arg) + L-arginine + ATP = L-arginyl-tRNA(Arg) + AMP + diphosphate. This Colwellia psychrerythraea (strain 34H / ATCC BAA-681) (Vibrio psychroerythus) protein is Arginine--tRNA ligase.